A 526-amino-acid polypeptide reads, in one-letter code: Adenylosuccinate synthetase (526 aa).

GTP is bound by residues 102–108 (GDEGKGK) and 130–132 (GHT). The active-site Proton acceptor is the aspartate 103. Residues aspartate 103 and glycine 130 each contribute to the Mg(2+) site. IMP contacts are provided by residues 103-106 (DEGK), 128-131 (NAGH), threonine 219, arginine 233, asparagine 310, threonine 325, and arginine 392. Residue histidine 131 is the Proton donor of the active site. Substrate is bound at residue 388–394 (TTTGRTR). GTP is bound by residues arginine 394, 420 to 422 (KVD), and 502 to 504 (GVG).

It belongs to the adenylosuccinate synthetase family. In terms of assembly, homodimer. Mg(2+) is required as a cofactor.

It localises to the cytoplasm. The catalysed reaction is IMP + L-aspartate + GTP = N(6)-(1,2-dicarboxyethyl)-AMP + GDP + phosphate + 2 H(+). Its pathway is purine metabolism; AMP biosynthesis via de novo pathway; AMP from IMP: step 1/2. Plays an important role in the de novo pathway and in the salvage pathway of purine nucleotide biosynthesis. Catalyzes the first committed step in the biosynthesis of AMP from IMP. The protein is Adenylosuccinate synthetase of Phaeodactylum tricornutum (strain CCAP 1055/1).